Here is a 314-residue protein sequence, read N- to C-terminus: Dihydropteroate synthase (314 aa).

A Pterin-binding domain is found at 10-294; it reads TVICGIINVT…DVASHRMAVE (285 aa). Asparagine 17 contacts Mg(2+). Residues threonine 57, aspartate 91, asparagine 110, aspartate 201, lysine 237, and 282 to 284 contribute to the (7,8-dihydropterin-6-yl)methyl diphosphate site; that span reads RVH.

This sequence belongs to the DHPS family. As to quaternary structure, homodimer or homotrimer. It depends on Mg(2+) as a cofactor.

The enzyme catalyses (7,8-dihydropterin-6-yl)methyl diphosphate + 4-aminobenzoate = 7,8-dihydropteroate + diphosphate. It functions in the pathway cofactor biosynthesis; tetrahydrofolate biosynthesis; 7,8-dihydrofolate from 2-amino-4-hydroxy-6-hydroxymethyl-7,8-dihydropteridine diphosphate and 4-aminobenzoate: step 1/2. Its function is as follows. Catalyzes the condensation of para-aminobenzoate (pABA) with 6-hydroxymethyl-7,8-dihydropterin diphosphate (DHPt-PP) to form 7,8-dihydropteroate (H2Pte), the immediate precursor of folate derivatives. The polypeptide is Dihydropteroate synthase (sulA) (Streptococcus pneumoniae serotype 4 (strain ATCC BAA-334 / TIGR4)).